The sequence spans 93 residues: MTQSPNVKTFDALFAELSERARTRPAGSGTVAALDGGVHGIGKKILEEAGEVWLAAEHESDEALAEEISQLLYWTQVLMLSRGLSLDDVYGKL.

The protein belongs to the PRA-PH family.

It is found in the cytoplasm. It catalyses the reaction 1-(5-phospho-beta-D-ribosyl)-ATP + H2O = 1-(5-phospho-beta-D-ribosyl)-5'-AMP + diphosphate + H(+). It functions in the pathway amino-acid biosynthesis; L-histidine biosynthesis; L-histidine from 5-phospho-alpha-D-ribose 1-diphosphate: step 2/9. The chain is Phosphoribosyl-ATP pyrophosphatase from Mycolicibacterium vanbaalenii (strain DSM 7251 / JCM 13017 / BCRC 16820 / KCTC 9966 / NRRL B-24157 / PYR-1) (Mycobacterium vanbaalenii).